A 333-amino-acid chain; its full sequence is Anthranilate phosphoribosyltransferase (333 aa).

5-phospho-alpha-D-ribose 1-diphosphate contacts are provided by residues G81, 84–85 (GD), T89, 91–94 (NIST), 109–117 (KHGNRSVSS), and A121. Anthranilate is bound at residue G81. S93 contributes to the Mg(2+) binding site. An anthranilate-binding site is contributed by N112. An anthranilate-binding site is contributed by R167. Mg(2+) contacts are provided by D225 and E226.

The protein belongs to the anthranilate phosphoribosyltransferase family. As to quaternary structure, homodimer. It depends on Mg(2+) as a cofactor.

It carries out the reaction N-(5-phospho-beta-D-ribosyl)anthranilate + diphosphate = 5-phospho-alpha-D-ribose 1-diphosphate + anthranilate. Its pathway is amino-acid biosynthesis; L-tryptophan biosynthesis; L-tryptophan from chorismate: step 2/5. Catalyzes the transfer of the phosphoribosyl group of 5-phosphorylribose-1-pyrophosphate (PRPP) to anthranilate to yield N-(5'-phosphoribosyl)-anthranilate (PRA). This chain is Anthranilate phosphoribosyltransferase, found in Actinobacillus succinogenes (strain ATCC 55618 / DSM 22257 / CCUG 43843 / 130Z).